Consider the following 134-residue polypeptide: Small ribosomal subunit protein uS11 (134 aa).

This sequence belongs to the universal ribosomal protein uS11 family. As to quaternary structure, part of the 30S ribosomal subunit. Interacts with proteins S7 and S18. Binds to IF-3.

In terms of biological role, located on the platform of the 30S subunit, it bridges several disparate RNA helices of the 16S rRNA. Forms part of the Shine-Dalgarno cleft in the 70S ribosome. The protein is Small ribosomal subunit protein uS11 of Variovorax paradoxus (strain S110).